Reading from the N-terminus, the 325-residue chain is MITDRQLSILNAIVEDYVDFGQPVGSKTLIERHNLNVSPATIRNEMKQLEDLNYIEKTHSSSGRSPSQLGFRYYVNRLLEQTSHQKTNKLRRLNQLLVENQYDVSSALTYFADELSNISQYTTLVVHPNHKQDIINNVHLIRANPNLVIMVIVFSSGHVEHVHLASDIPFSNDKLNTISNFVTNKLTEFNQNLQDDIVSFVQSEQEEIFINKLINTMNNHISNQSNSIYMGGKVKLIDALNESNVSSIQPILQYIESNRIAELLQDISSPNINVKIGNEIDDSLSDISIVTSQYHFDETLKGQIAVIGPTAMHYQNVIQLLNRIW.

The protein belongs to the HrcA family.

In terms of biological role, negative regulator of class I heat shock genes (grpE-dnaK-dnaJ and groELS operons). Prevents heat-shock induction of these operons. This is Heat-inducible transcription repressor HrcA from Staphylococcus aureus (strain JH1).